We begin with the raw amino-acid sequence, 571 residues long: Folylpolyglutamate synthase (571 aa).

122-125 (GKGS) provides a ligand contact to ATP. Residues Ser146, Glu215, and His243 each coordinate Mg(2+). Arg363 and Asp385 together coordinate ATP.

Belongs to the folylpolyglutamate synthase family. The cofactor is a monovalent cation. As to expression, expressed in both shoots and roots, but expression in roots is higher compared with shoots. Distinct expression in the quiescent center (QC) region of the root tip. Also expressed in vascular tissues of the cotyledons and hypocotyls, and the first true leaves of 7 days old seedlings.

It is found in the plastid. The protein resides in the chloroplast. The enzyme catalyses (6S)-5,6,7,8-tetrahydrofolyl-(gamma-L-Glu)(n) + L-glutamate + ATP = (6S)-5,6,7,8-tetrahydrofolyl-(gamma-L-Glu)(n+1) + ADP + phosphate + H(+). It functions in the pathway cofactor biosynthesis; tetrahydrofolylpolyglutamate biosynthesis. Catalyzes conversion of folates to polyglutamate derivatives allowing concentration of folate compounds in the cell and the intracellular retention of these cofactors, which are important substrates for most of the folate-dependent enzymes that are involved in one-carbon transfer reactions involved in purine, pyrimidine and amino acid synthesis. Essential for organellar and whole-plant folate homeostasis. Required for postembryonic root development. Generates polyglutamylated folate cofactors to support C1 metabolism required for meristem maintenance and cell expansion during postembryonic root development. This Arabidopsis thaliana (Mouse-ear cress) protein is Folylpolyglutamate synthase.